The sequence spans 317 residues: MDFGASAKNLSTPVKGAKIVPNMTVDELVKEYAGCAFGAGRLAEAVDIYYEMLASGKTTKFFGLAGAMTPAGMRNIIADLIRDGYIDVLVTTGANMVHDTVEALGLHHYKGSDCANDIQLRHECIDRIYDVYLPDQHFTDLEEFLQGVYSGLPQENLSIRQVLTEIGKNLDDDSSILKTAAEMGVPVYCPALQDSVIGLQAWLYKEGNPLHVDAFADMHEFMDICYGAESAGTMLLGGGVPKNYILQSMLVTPRSFDYAIQLTMDRPETGGLSGATLDEAQSWGKVGEDAKSVTVYADSTITLPLIVSAVRTRLSKR.

The Nucleophile role is filled by Lys-285.

It belongs to the deoxyhypusine synthase family. It depends on NAD(+) as a cofactor.

The catalysed reaction is [eIF5A protein]-L-lysine + spermidine = [eIF5A protein]-deoxyhypusine + propane-1,3-diamine. It participates in protein modification; eIF5A hypusination. In terms of biological role, catalyzes the NAD-dependent oxidative cleavage of spermidine and the subsequent transfer of the butylamine moiety of spermidine to the epsilon-amino group of a specific lysine residue of the eIF-5A precursor protein to form the intermediate deoxyhypusine residue. The polypeptide is Probable deoxyhypusine synthase 1 (dys1) (Methanosarcina mazei (strain ATCC BAA-159 / DSM 3647 / Goe1 / Go1 / JCM 11833 / OCM 88) (Methanosarcina frisia)).